Reading from the N-terminus, the 88-residue chain is MSLLDYFRSNKKQSTAQLAKERLQIIVAHERSSRGGPDYLPQLKQDILDVIRKYVQIDPDKITVQLDKKSDELSVLELNITFADDKKG.

It belongs to the MinE family.

Its function is as follows. Prevents the cell division inhibition by proteins MinC and MinD at internal division sites while permitting inhibition at polar sites. This ensures cell division at the proper site by restricting the formation of a division septum at the midpoint of the long axis of the cell. This is Cell division topological specificity factor from Aeromonas hydrophila subsp. hydrophila (strain ATCC 7966 / DSM 30187 / BCRC 13018 / CCUG 14551 / JCM 1027 / KCTC 2358 / NCIMB 9240 / NCTC 8049).